The primary structure comprises 350 residues: S-adenosylmethionine:tRNA ribosyltransferase-isomerase (350 aa).

Belongs to the QueA family. As to quaternary structure, monomer.

The protein localises to the cytoplasm. It catalyses the reaction 7-aminomethyl-7-carbaguanosine(34) in tRNA + S-adenosyl-L-methionine = epoxyqueuosine(34) in tRNA + adenine + L-methionine + 2 H(+). It functions in the pathway tRNA modification; tRNA-queuosine biosynthesis. Transfers and isomerizes the ribose moiety from AdoMet to the 7-aminomethyl group of 7-deazaguanine (preQ1-tRNA) to give epoxyqueuosine (oQ-tRNA). This is S-adenosylmethionine:tRNA ribosyltransferase-isomerase from Bacillus cytotoxicus (strain DSM 22905 / CIP 110041 / 391-98 / NVH 391-98).